The primary structure comprises 955 residues: Vacuolar membrane protease (955 aa).

Topologically, residues 1–16 are cytoplasmic; the sequence is MASLRLPRANPLAFTR. Residues 17 to 37 form a helical membrane-spanning segment; the sequence is WPVTVITAIVYLALLIPLLVV. At 38 to 390 the chain is on the vacuolar side; that stretch reads HHVVPSAPSS…STFVLFQLHT (353 aa). N-linked (GlcNAc...) asparagine glycans are attached at residues asparagine 53 and asparagine 119. Residues histidine 174 and aspartate 186 each contribute to the Zn(2+) site. Residue glutamate 220 is the Proton acceptor of the active site. Zn(2+) contacts are provided by glutamate 221, glutamate 246, and histidine 319. The chain crosses the membrane as a helical span at residues 391–411; sequence LFALLVTLLIVGPLTLLFTSI. The Cytoplasmic segment spans residues 412 to 442; it reads ALTKADKMYLFRSSAKSEDRLDVVPLQGLRG. A helical transmembrane segment spans residues 443–463; it reads FFRFPFLFGIPTVVTVGLAYL. Topologically, residues 464–473 are vacuolar; the sequence is VTKVNPYIIH. A helical transmembrane segment spans residues 474–494; that stretch reads SSAYAVWSMMVAAWVFLAWFV. The Cytoplasmic portion of the chain corresponds to 495 to 508; sequence SRVADFARPSAFHR. A helical transmembrane segment spans residues 509–529; that stretch reads IYTLTWMYVLSWVSAVIATVY. Residues 530–533 lie on the Vacuolar side of the membrane; the sequence is ANQR. Residues 534 to 554 traverse the membrane as a helical segment; it reads GLAGGYFIFFFHAGIFLAKWI. The Cytoplasmic portion of the chain corresponds to 555 to 656; it reads SYLELFALPS…WSYALPKWTW (102 aa). The span at 574–590 shows a compositional bias: low complexity; that stretch reads SASGRASGHGSRRGTTS. Positions 574-611 are disordered; that stretch reads SASGRASGHGSRRGTTSGEDDGEEAEEEPTESTSLLGS. The segment covering 591-603 has biased composition (acidic residues); sequence GEDDGEEAEEEPT. Residues 657 to 677 traverse the membrane as a helical segment; the sequence is VLQLLLTAPITLIMVGPLALL. At 678–693 the chain is on the vacuolar side; sequence TISAISQTGQDGGHPL. Residues 694–714 form a helical membrane-spanning segment; that stretch reads FAYVAIAIFTTIMLTPLLPFI. Residues 715-721 lie on the Cytoplasmic side of the membrane; that stretch reads HRYTYHV. A helical membrane pass occupies residues 722–742; sequence PLFLLAVFLGTLIYNLVAFPF. Topologically, residues 743–955 are vacuolar; that stretch reads SDSNRLKLYY…RRAFEIGNDD (213 aa). N-linked (GlcNAc...) asparagine glycosylation occurs at asparagine 826.

The protein belongs to the peptidase M28 family. It depends on Zn(2+) as a cofactor.

It is found in the vacuole membrane. Its function is as follows. May be involved in vacuolar sorting and osmoregulation. This Aspergillus oryzae (strain ATCC 42149 / RIB 40) (Yellow koji mold) protein is Vacuolar membrane protease.